The sequence spans 818 residues: Hillarin (818 aa).

One can recognise an LIM zinc-binding domain in the interval 9–76 (STCLRCSETV…SSHVPKSGPG (68 aa)). The segment at 97 to 141 (FVNEQIRGTRSEVDGGPLGGSRQSTPNGYGSREISSPSQNDSDYK) is disordered. A compositionally biased stretch (polar residues) spans 117-137 (SRQSTPNGYGSREISSPSQND). Residues 216–272 (QDEWERELQRLTHKFEKELATSRRSRDEANILTMRHEQQKEDLEKNMTLRRSKKKES) are a coiled coil.

It belongs to the transglutaminase-like superfamily. In terms of assembly, interacts with pnut. As to expression, localizes to the neuropil of the embryonic central nervous system (at protein level). Also detected in third instar larval brain (at protein level).

The protein localises to the cytoplasm. It is found in the cell cortex. Its subcellular location is the cleavage furrow. May act as a modulator of septin function during cytokinesis in the developing nervous system. The sequence is that of Hillarin from Drosophila melanogaster (Fruit fly).